We begin with the raw amino-acid sequence, 239 residues long: Putative 3-methyladenine DNA glycosylase (239 aa).

The protein belongs to the DNA glycosylase MPG family.

The protein is Putative 3-methyladenine DNA glycosylase of Pseudomonas aeruginosa (strain LESB58).